We begin with the raw amino-acid sequence, 487 residues long: Meiotic recombination protein SPO11-4 (487 aa).

The disordered stretch occupies residues 1 to 56; sequence MDDSTDDDSYHPRKHYAYDRQVSSSRWRTSREYIRGPGPETHTTESAQDGQDPPAG. A Topo IIA-type catalytic domain is found at 119 to 252; that stretch reads KSRVEARKTL…LGIIAAEKGI (134 aa). The active-site O-(5'-phospho-DNA)-tyrosine intermediate is Tyr-213. Glu-301 and Asp-353 together coordinate Mg(2+).

Belongs to the TOP6A family. Homodimer. Interacts with TOP6B. Mg(2+) is required as a cofactor.

The protein resides in the nucleus. The catalysed reaction is ATP-dependent breakage, passage and rejoining of double-stranded DNA.. Functionally, required for meiotic recombination. Mediates DNA cleavage that forms the double-strand breaks (DSB) that initiate meiotic recombination. Possesses double-stranded DNA cleavage activity in vitro. The polypeptide is Meiotic recombination protein SPO11-4 (SPO11-4) (Oryza sativa subsp. japonica (Rice)).